A 187-amino-acid polypeptide reads, in one-letter code: Peptidyl-tRNA hydrolase (187 aa).

Tyrosine 14 lines the tRNA pocket. The active-site Proton acceptor is histidine 19. TRNA is bound by residues tyrosine 64, asparagine 66, and asparagine 112.

This sequence belongs to the PTH family. Monomer.

It is found in the cytoplasm. The enzyme catalyses an N-acyl-L-alpha-aminoacyl-tRNA + H2O = an N-acyl-L-amino acid + a tRNA + H(+). Hydrolyzes ribosome-free peptidyl-tRNAs (with 1 or more amino acids incorporated), which drop off the ribosome during protein synthesis, or as a result of ribosome stalling. Functionally, catalyzes the release of premature peptidyl moieties from peptidyl-tRNA molecules trapped in stalled 50S ribosomal subunits, and thus maintains levels of free tRNAs and 50S ribosomes. The protein is Peptidyl-tRNA hydrolase of Bdellovibrio bacteriovorus (strain ATCC 15356 / DSM 50701 / NCIMB 9529 / HD100).